The chain runs to 274 residues: Large ribosomal subunit protein uL2 (274 aa).

A disordered region spans residues 223–265 (VVMNPVDHPHGGGEGRTSGGRHPVSPWGVPTKGYKTRSNKRTD).

Belongs to the universal ribosomal protein uL2 family. In terms of assembly, part of the 50S ribosomal subunit. Forms a bridge to the 30S subunit in the 70S ribosome.

One of the primary rRNA binding proteins. Required for association of the 30S and 50S subunits to form the 70S ribosome, for tRNA binding and peptide bond formation. It has been suggested to have peptidyltransferase activity; this is somewhat controversial. Makes several contacts with the 16S rRNA in the 70S ribosome. This chain is Large ribosomal subunit protein uL2, found in Vibrio vulnificus (strain CMCP6).